The primary structure comprises 120 residues: ATP-dependent Clp protease adapter protein ClpS (120 aa).

The disordered stretch occupies residues methionine 1–alanine 27.

The protein belongs to the ClpS family. In terms of assembly, binds to the N-terminal domain of the chaperone ClpA.

In terms of biological role, involved in the modulation of the specificity of the ClpAP-mediated ATP-dependent protein degradation. The protein is ATP-dependent Clp protease adapter protein ClpS of Pseudomonas putida (strain GB-1).